Reading from the N-terminus, the 543-residue chain is T-complex protein 1 subunit gamma (543 aa).

The protein belongs to the TCP-1 chaperonin family.

It is found in the cytoplasm. Molecular chaperone; assists the folding of proteins upon ATP hydrolysis. Known to play a role, in vitro, in the folding of actin and tubulin. Plays a role in microtubule polymerization. This chain is T-complex protein 1 subunit gamma, found in Caenorhabditis elegans.